Reading from the N-terminus, the 157-residue chain is Peptide methionine sulfoxide reductase MsrA (157 aa).

C10 is an active-site residue.

The protein belongs to the MsrA Met sulfoxide reductase family.

The enzyme catalyses L-methionyl-[protein] + [thioredoxin]-disulfide + H2O = L-methionyl-(S)-S-oxide-[protein] + [thioredoxin]-dithiol. The catalysed reaction is [thioredoxin]-disulfide + L-methionine + H2O = L-methionine (S)-S-oxide + [thioredoxin]-dithiol. Has an important function as a repair enzyme for proteins that have been inactivated by oxidation. Catalyzes the reversible oxidation-reduction of methionine sulfoxide in proteins to methionine. This Clostridium perfringens (strain SM101 / Type A) protein is Peptide methionine sulfoxide reductase MsrA.